The sequence spans 424 residues: Synaptotagmin-1 (424 aa).

Residues 1–60 (MVSESHHEALAAPPATTVAAALPSNVTEPAAPGGGGGKEDAFSNLKKKFMNELNKIPLPP) are Vesicular-facing. The N-linked (GlcNAc...) asparagine glycan is linked to Asn-25. The chain crosses the membrane as a helical span at residues 61-82 (WALIAIAIVAVLLILTCCFCLC). S-palmitoyl cysteine attachment occurs at residues Cys-77, Cys-78, Cys-80, Cys-82, and Cys-85. Over 83-424 (KKCLFKKKNK…EVDAMLAVKK (342 aa)) the chain is Cytoplasmic. Residues 117 to 142 (KDQALKDDDAETGLTDGEEKEEPKEV) are disordered. The span at 124–136 (DDAETGLTDGEEK) shows a compositional bias: acidic residues. The segment at 138-384 (EPKEVEKLGK…AIGKVFVGYN (247 aa)) is phospholipid binding. C2 domains follow at residues 144–263 (KLGK…EEWR) and 275–408 (KLGD…AQWH). 14 residues coordinate Ca(2+): Leu-174, Asp-175, Asp-181, Asp-233, Phe-234, Asp-235, Ser-238, Lys-239, Asp-241, Asp-306, Asp-312, Asp-366, Asp-368, and Asp-374.

Belongs to the synaptotagmin family. As to quaternary structure, homotetramer. Ca(2+) serves as cofactor.

The protein localises to the cytoplasmic vesicle. Its subcellular location is the secretory vesicle membrane. The protein resides in the secretory vesicle. It localises to the synaptic vesicle membrane. It is found in the chromaffin granule membrane. The protein localises to the cytoplasm. Calcium sensor that participates in triggering neurotransmitter release at the synapse. May have a regulatory role in the membrane interactions during trafficking of synaptic vesicles at the active zone of the synapse. It binds acidic phospholipids with a specificity that requires the presence of both an acidic head group and a diacyl backbone. May play a role in dendrite formation by melanocytes. The protein is Synaptotagmin-1 (SYT1) of Gallus gallus (Chicken).